The primary structure comprises 474 residues: Methylenetetrahydrofolate--tRNA-(uracil-5-)-methyltransferase TrmFO (474 aa).

Residue 9–14 (GGGLAG) participates in FAD binding.

The protein belongs to the MnmG family. TrmFO subfamily. FAD is required as a cofactor.

It is found in the cytoplasm. The enzyme catalyses uridine(54) in tRNA + (6R)-5,10-methylene-5,6,7,8-tetrahydrofolate + NADH + H(+) = 5-methyluridine(54) in tRNA + (6S)-5,6,7,8-tetrahydrofolate + NAD(+). It catalyses the reaction uridine(54) in tRNA + (6R)-5,10-methylene-5,6,7,8-tetrahydrofolate + NADPH + H(+) = 5-methyluridine(54) in tRNA + (6S)-5,6,7,8-tetrahydrofolate + NADP(+). Functionally, catalyzes the folate-dependent formation of 5-methyl-uridine at position 54 (M-5-U54) in all tRNAs. The chain is Methylenetetrahydrofolate--tRNA-(uracil-5-)-methyltransferase TrmFO from Methylorubrum extorquens (strain PA1) (Methylobacterium extorquens).